Reading from the N-terminus, the 256-residue chain is Cell division protein DivIB (256 aa).

Over 1–30 the chain is Cytoplasmic; sequence MNNSKVIKLQDRVPKLKNQKKKNKKNVNHR. Residues 31–51 form a helical membrane-spanning segment; that stretch reads LILYISILFLLVLFLIYFRSP. Residues 52–256 lie on the Extracellular side of the membrane; that stretch reads LSNIKKISVF…KELGAEEKKE (205 aa). In terms of domain architecture, POTRA spans 53–121; sequence SNIKKISVFG…NNIDIHIEEY (69 aa).

Belongs to the FtsQ/DivIB family. DivIB subfamily.

It is found in the cell membrane. Its function is as follows. Cell division protein that may be involved in stabilizing or promoting the assembly of the division complex. In Bacillus cereus (strain ATCC 14579 / DSM 31 / CCUG 7414 / JCM 2152 / NBRC 15305 / NCIMB 9373 / NCTC 2599 / NRRL B-3711), this protein is Cell division protein DivIB.